Here is a 186-residue protein sequence, read N- to C-terminus: MAQTDDRLPQMHATTILMVRKGGRVVIGGDGQVSLGQTIVKGNARKVRRLAKGAVIGGFAGATADAFTLFERLEAKLEQYPGQLSRACVELTKDWRTDRYLRRLEAMMLVADKEVGLLLSGAGDVLEPETGVMAIGSGGNYALSAARALEDGELDAEAIVRRSMKIAAEICVYTNGNLVIETLDAA.

Residue Thr-14 is part of the active site. Ala-168, Cys-171, and Thr-174 together coordinate Na(+).

Belongs to the peptidase T1B family. HslV subfamily. A double ring-shaped homohexamer of HslV is capped on each side by a ring-shaped HslU homohexamer. The assembly of the HslU/HslV complex is dependent on binding of ATP.

It is found in the cytoplasm. The catalysed reaction is ATP-dependent cleavage of peptide bonds with broad specificity.. Its activity is regulated as follows. Allosterically activated by HslU binding. Protease subunit of a proteasome-like degradation complex believed to be a general protein degrading machinery. This is ATP-dependent protease subunit HslV from Methylorubrum extorquens (strain CM4 / NCIMB 13688) (Methylobacterium extorquens).